The sequence spans 492 residues: Probable cobyric acid synthase (492 aa).

The region spanning 252–444 is the GATase cobBQ-type domain; the sequence is PIEVNIVKFS…FHGILENFEF (193 aa). The active-site Nucleophile is the Cys-330. The active site involves His-436.

The protein belongs to the CobB/CobQ family. CobQ subfamily.

It participates in cofactor biosynthesis; adenosylcobalamin biosynthesis. In terms of biological role, catalyzes amidations at positions B, D, E, and G on adenosylcobyrinic A,C-diamide. NH(2) groups are provided by glutamine, and one molecule of ATP is hydrogenolyzed for each amidation. In Methanococcus maripaludis (strain C5 / ATCC BAA-1333), this protein is Probable cobyric acid synthase.